A 433-amino-acid chain; its full sequence is Myricetin 3-O-glucosyl 1,2-rhamnoside 6'-O-caffeoyltransferase AT2 (433 aa).

Active-site proton acceptor residues include His-157 and Asp-375.

It belongs to the plant acyltransferase family. In terms of tissue distribution, expressed in young cromes.

It carries out the reaction myricetin 3-O-[beta-D-glucosyl-(1-&gt;2)-alpha-L-rhamnoside] + (E)-caffeoyl-CoA = myricetin 3-O-[(6-O-(E)-caffeoyl-beta-D-glucosyl)-(1-&gt;2)-alpha-L-rhamnoside] + CoA. It participates in flavonoid metabolism. Functionally, caffeoyltransferase involved in montbretin A (MbA) biosynthesis. Catalyzes the caffeoylation of myricetin 3-O-beta-D-glucosyl 1,2-alpha-L-rhamnoside (MRG) to produce myricetin 3-O-(6'-O-caffeoyl)-beta-D-glucosyl 1,2-alpha-L-rhamnoside (mini-MbA), a precursor of MbA. Mini-MbA and MbA are potent inhibitors of human pancreatic alpha-amylase and are being developed as drug candidates to treat type-2 diabetes. In vitro, is able to catalyze the caffeoylation of quercetin 3-O-sophoroside (QGG), although QGG may not be a physiological substrate in vivo. In vitro, can use coumaryl-CoA, feruloyl-CoA and acetyl-CoA, although these three acyl donors may not be physiological in vivo. The chain is Myricetin 3-O-glucosyl 1,2-rhamnoside 6'-O-caffeoyltransferase AT2 from Crocosmia x crocosmiiflora (Montbretia).